The sequence spans 453 residues: Probable glucan endo-1,3-beta-glucosidase eglC (453 aa).

Residues 1–18 (MQTRQLLALALAVAATEA) form the signal peptide. The Proton donor role is filled by glutamate 128. Residue asparagine 183 is glycosylated (N-linked (GlcNAc...) asparagine). Glutamate 239 serves as the catalytic Nucleophile. Residues asparagine 364, asparagine 368, and asparagine 376 are each glycosylated (N-linked (GlcNAc...) asparagine). Residues 370-380 (TYPGSWNSTRP) show a composition bias toward polar residues. The segment at 370 to 423 (TYPGSWNSTRPGANGGSSGSSGSSGSSGSSGSSGSSGSGASGHSSSTGSSSFPS) is disordered. Composition is skewed to low complexity over residues 389–402 (SSGS…SGSS) and 410–423 (SGHS…SFPS). Residue asparagine 430 is the site of GPI-anchor amidated asparagine attachment. A propeptide spans 431-453 (SASGLSGSLFGAVAAVFVALAAL) (removed in mature form).

Belongs to the glycosyl hydrolase 17 family. In terms of processing, the GPI-anchor is attached to the protein in the endoplasmic reticulum and serves to target the protein to the cell surface. There, the glucosamine-inositol phospholipid moiety is cleaved off and the GPI-modified mannoprotein is covalently attached via its lipidless GPI glycan remnant to the 1,6-beta-glucan of the outer cell wall layer.

It localises to the cell membrane. It is found in the secreted. Its subcellular location is the cell wall. It catalyses the reaction Hydrolysis of (1-&gt;3)-beta-D-glucosidic linkages in (1-&gt;3)-beta-D-glucans.. Functionally, glucanases play a role in cell expansion during growth, in cell-cell fusion during mating, and in spore release during sporulation. This enzyme may be involved in beta-glucan degradation and also function biosynthetically as a transglycosylase. The protein is Probable glucan endo-1,3-beta-glucosidase eglC (eglC) of Aspergillus clavatus (strain ATCC 1007 / CBS 513.65 / DSM 816 / NCTC 3887 / NRRL 1 / QM 1276 / 107).